Reading from the N-terminus, the 84-residue chain is Exodeoxyribonuclease 7 small subunit (84 aa).

Belongs to the XseB family. As to quaternary structure, heterooligomer composed of large and small subunits.

It is found in the cytoplasm. The catalysed reaction is Exonucleolytic cleavage in either 5'- to 3'- or 3'- to 5'-direction to yield nucleoside 5'-phosphates.. Functionally, bidirectionally degrades single-stranded DNA into large acid-insoluble oligonucleotides, which are then degraded further into small acid-soluble oligonucleotides. In Bartonella quintana (strain Toulouse) (Rochalimaea quintana), this protein is Exodeoxyribonuclease 7 small subunit.